The sequence spans 413 residues: Serine hydroxymethyltransferase (413 aa).

Residues Leu-116 and 120 to 122 each bind (6S)-5,6,7,8-tetrahydrofolate; that span reads GHL. Lys-225 carries the post-translational modification N6-(pyridoxal phosphate)lysine. 349–351 serves as a coordination point for (6S)-5,6,7,8-tetrahydrofolate; the sequence is SPF.

It belongs to the SHMT family. In terms of assembly, homodimer. Requires pyridoxal 5'-phosphate as cofactor.

It is found in the cytoplasm. The enzyme catalyses (6R)-5,10-methylene-5,6,7,8-tetrahydrofolate + glycine + H2O = (6S)-5,6,7,8-tetrahydrofolate + L-serine. It functions in the pathway one-carbon metabolism; tetrahydrofolate interconversion. The protein operates within amino-acid biosynthesis; glycine biosynthesis; glycine from L-serine: step 1/1. In terms of biological role, catalyzes the reversible interconversion of serine and glycine with tetrahydrofolate (THF) serving as the one-carbon carrier. This reaction serves as the major source of one-carbon groups required for the biosynthesis of purines, thymidylate, methionine, and other important biomolecules. Also exhibits THF-independent aldolase activity toward beta-hydroxyamino acids, producing glycine and aldehydes, via a retro-aldol mechanism. This is Serine hydroxymethyltransferase from Levilactobacillus brevis (strain ATCC 367 / BCRC 12310 / CIP 105137 / JCM 1170 / LMG 11437 / NCIMB 947 / NCTC 947) (Lactobacillus brevis).